The following is a 490-amino-acid chain: Myocilin (490 aa).

The signal sequence occupies residues 1 to 18 (MPAVQLLLLACLLGGVGA). The stretch at 51-170 (GQAMLAIQEL…QEVASLRRGQ (120 aa)) forms a coiled coil. The disordered stretch occupies residues 152 to 186 (LARRLESSSQEVASLRRGQCPQAHSSSQDVPSGSR). A compositionally biased stretch (polar residues) spans 173–182 (QAHSSSQDVP). Residues 230 to 489 (GCGELVWVGE…MVSYDIKLSR (260 aa)) enclose the Olfactomedin-like domain. C231 and C419 are disulfide-bonded. Ca(2+) contacts are provided by D366, N414, A415, I463, and D464. Positions 488-490 (SRL) match the Microbody targeting signal motif.

In terms of assembly, homodimer (via N-terminus). Can also form higher oligomers. Interacts with OLFM3, FN1, NRCAM, GLDN and NFASC. Interacts (via N-terminus) with MYL2. Interacts with SFRP1, FRZB, FZD7, FZD10, FZD1 and WIF1; regulates Wnt signaling. Interacts with SNTA1; regulates muscle hypertrophy. Interacts with ERBB2 and ERBB3; activates ERBB2-ERBB3 signaling pathway. Interacts with SNCG; affects its secretion and its aggregation. In terms of processing, palmitoylated. Post-translationally, undergoes a calcium-dependent proteolytic cleavage at Gln-212 by CAPN2 in the endoplasmic reticulum. The result is the production of two fragments, one of 35 kDa containing the C-terminal olfactomedin-like domain, and another of 20 kDa containing the N-terminal leucine zipper-like domain. Glycosylated. As to expression, the myocilin 35 kDa fragment is detected in iris and ciliary body.

Its subcellular location is the secreted. It is found in the golgi apparatus. The protein resides in the cytoplasmic vesicle. The protein localises to the extracellular space. It localises to the extracellular matrix. Its subcellular location is the extracellular exosome. It is found in the mitochondrion. The protein resides in the mitochondrion intermembrane space. The protein localises to the mitochondrion inner membrane. It localises to the mitochondrion outer membrane. Its subcellular location is the rough endoplasmic reticulum. It is found in the cell projection. The protein resides in the cilium. The protein localises to the endoplasmic reticulum. Secreted glycoprotein regulating the activation of different signaling pathways in adjacent cells to control different processes including cell adhesion, cell-matrix adhesion, cytoskeleton organization and cell migration. Promotes substrate adhesion, spreading and formation of focal contacts. Negatively regulates cell-matrix adhesion and stress fiber assembly through Rho protein signal transduction. Modulates the organization of actin cytoskeleton by stimulating the formation of stress fibers through interactions with components of Wnt signaling pathways. Promotes cell migration through activation of PTK2 and the downstream phosphatidylinositol 3-kinase signaling. Plays a role in bone formation and promotes osteoblast differentiation in a dose-dependent manner through mitogen-activated protein kinase signaling. Mediates myelination in the peripheral nervous system through ERBB2/ERBB3 signaling. Plays a role as a regulator of muscle hypertrophy through the components of dystrophin-associated protein complex. Involved in positive regulation of mitochondrial depolarization. Plays a role in neurite outgrowth. May participate in the obstruction of fluid outflow in the trabecular meshwork. The sequence is that of Myocilin (MYOC) from Bos taurus (Bovine).